The sequence spans 609 residues: Dihydroxy-acid dehydratase (609 aa).

Asp-81 is a binding site for Mg(2+). Cys-122 is a binding site for [2Fe-2S] cluster. Mg(2+)-binding residues include Asp-123 and Lys-124. Residue Lys-124 is modified to N6-carboxylysine. Cys-195 serves as a coordination point for [2Fe-2S] cluster. Glu-491 provides a ligand contact to Mg(2+). The active-site Proton acceptor is Ser-517.

The protein belongs to the IlvD/Edd family. As to quaternary structure, homodimer. The cofactor is [2Fe-2S] cluster. It depends on Mg(2+) as a cofactor.

It catalyses the reaction (2R)-2,3-dihydroxy-3-methylbutanoate = 3-methyl-2-oxobutanoate + H2O. It carries out the reaction (2R,3R)-2,3-dihydroxy-3-methylpentanoate = (S)-3-methyl-2-oxopentanoate + H2O. It participates in amino-acid biosynthesis; L-isoleucine biosynthesis; L-isoleucine from 2-oxobutanoate: step 3/4. The protein operates within amino-acid biosynthesis; L-valine biosynthesis; L-valine from pyruvate: step 3/4. Functions in the biosynthesis of branched-chain amino acids. Catalyzes the dehydration of (2R,3R)-2,3-dihydroxy-3-methylpentanoate (2,3-dihydroxy-3-methylvalerate) into 2-oxo-3-methylpentanoate (2-oxo-3-methylvalerate) and of (2R)-2,3-dihydroxy-3-methylbutanoate (2,3-dihydroxyisovalerate) into 2-oxo-3-methylbutanoate (2-oxoisovalerate), the penultimate precursor to L-isoleucine and L-valine, respectively. This is Dihydroxy-acid dehydratase from Acinetobacter baumannii (strain AB0057).